The primary structure comprises 154 residues: Putative pre-16S rRNA nuclease (154 aa).

Belongs to the YqgF nuclease family.

It localises to the cytoplasm. In terms of biological role, could be a nuclease involved in processing of the 5'-end of pre-16S rRNA. The sequence is that of Putative pre-16S rRNA nuclease from Rickettsia felis (strain ATCC VR-1525 / URRWXCal2) (Rickettsia azadi).